The following is a 244-amino-acid chain: EKC/KEOPS complex subunit Tp53rkb (244 aa).

In terms of domain architecture, Protein kinase spans Leu-24–Gly-244. Residue Ser-25 is modified to Phosphoserine. ATP contacts are provided by residues Val-30–Val-38 and Lys-51. The Nuclear localization signal signature appears at Arg-69 to Gly-86. Catalysis depends on Asp-153, which acts as the Proton acceptor.

Belongs to the protein kinase superfamily. BUD32 family. As to quaternary structure, component of the EKC/KEOPS complex composed of at least GON7, TP53RK, TPRKB, OSGEP and LAGE3; the whole complex dimerizes.

The protein resides in the nucleus. The catalysed reaction is L-seryl-[protein] + ATP = O-phospho-L-seryl-[protein] + ADP + H(+). It carries out the reaction L-threonyl-[protein] + ATP = O-phospho-L-threonyl-[protein] + ADP + H(+). Component of the EKC/KEOPS complex that is required for the formation of a threonylcarbamoyl group on adenosine at position 37 (t(6)A37) in tRNAs that read codons beginning with adenine. The complex is probably involved in the transfer of the threonylcarbamoyl moiety of threonylcarbamoyl-AMP (TC-AMP) to the N6 group of A37. TP53RK has ATPase activity in the context of the EKC/KEOPS complex and likely plays a supporting role to the catalytic subunit OSGEP. Atypical protein kinase that phosphorylates 'Ser-15' of p53/TP53 protein and may therefore participate in its activation. The sequence is that of EKC/KEOPS complex subunit Tp53rkb from Mus musculus (Mouse).